The sequence spans 349 residues: Alcohol dehydrogenase 1 (349 aa).

Residues cysteine 46, histidine 69, cysteine 100, cysteine 103, cysteine 106, cysteine 114, and cysteine 156 each coordinate Zn(2+). Residues 180-186, aspartate 204, lysine 208, 270-272, and arginine 342 each bind NAD(+); these read GAGGGLG and VGL.

It belongs to the zinc-containing alcohol dehydrogenase family. As to quaternary structure, homotetramer. Zn(2+) is required as a cofactor.

It catalyses the reaction a primary alcohol + NAD(+) = an aldehyde + NADH + H(+). The enzyme catalyses a secondary alcohol + NAD(+) = a ketone + NADH + H(+). This is Alcohol dehydrogenase 1 from Caenorhabditis elegans.